The primary structure comprises 570 residues: Zinc finger and BTB domain-containing protein 44 (570 aa).

K4 is covalently cross-linked (Glycyl lysine isopeptide (Lys-Gly) (interchain with G-Cter in SUMO2)). The 68-residue stretch at 31–98 (CDITIRVQDK…AYTATLSINT (68 aa)) folds into the BTB domain. A phosphoserine mark is found at S135, S159, S161, S165, S191, and S194. 2 disordered regions span residues 194-220 (SPVK…NRNQ) and 243-267 (EKVK…RRMA). Positions 199–220 (GTQTSSPQVLNSSASYSENRNQ) are enriched in polar residues. T200 bears the Phosphothreonine mark. A Glycyl lysine isopeptide (Lys-Gly) (interchain with G-Cter in SUMO2) cross-link involves residue K290. Positions 295 to 369 (SDEEVHEEVS…NAPPDDDDRL (75 aa)) are disordered. A compositionally biased stretch (low complexity) spans 304–318 (SQPVSASQSSLSDQQ). A compositionally biased stretch (polar residues) spans 352 to 361 (TLQSTSSTNA). 4 C2H2-type zinc fingers span residues 399–421 (FQCP…MLIH), 427–449 (FQCD…RLKH), 455–479 (FRCQ…VSRH), and 487–511 (YECK…SLNH).

The protein localises to the nucleus. Functionally, may be involved in transcriptional regulation. This chain is Zinc finger and BTB domain-containing protein 44 (ZBTB44), found in Homo sapiens (Human).